A 101-amino-acid polypeptide reads, in one-letter code: CRISPR-associated endoribonuclease Cas2 (101 aa).

A Mg(2+)-binding site is contributed by Asp-17.

Belongs to the CRISPR-associated endoribonuclease Cas2 protein family. In terms of assembly, homodimer, forms a heterotetramer with a Cas1 homodimer. Mg(2+) is required as a cofactor.

Its function is as follows. CRISPR (clustered regularly interspaced short palindromic repeat), is an adaptive immune system that provides protection against mobile genetic elements (viruses, transposable elements and conjugative plasmids). CRISPR clusters contain sequences complementary to antecedent mobile elements and target invading nucleic acids. CRISPR clusters are transcribed and processed into CRISPR RNA (crRNA). Functions as a ssRNA-specific endoribonuclease. Involved in the integration of spacer DNA into the CRISPR cassette. This is CRISPR-associated endoribonuclease Cas2 from Methanopyrus kandleri (strain AV19 / DSM 6324 / JCM 9639 / NBRC 100938).